The following is a 497-amino-acid chain: Glycerol kinase (497 aa).

Thr12 contributes to the ADP binding site. Positions 12, 13, and 14 each coordinate ATP. Thr12 provides a ligand contact to sn-glycerol 3-phosphate. Arg16 serves as a coordination point for ADP. Residues Arg82, Glu83, Tyr134, and Asp243 each coordinate sn-glycerol 3-phosphate. Glycerol contacts are provided by Arg82, Glu83, Tyr134, Asp243, and Gln244. Positions 265 and 308 each coordinate ADP. The ATP site is built by Thr265, Gly308, Gln312, and Gly409. ADP-binding residues include Gly409 and Asn413.

The protein belongs to the FGGY kinase family.

The enzyme catalyses glycerol + ATP = sn-glycerol 3-phosphate + ADP + H(+). It participates in polyol metabolism; glycerol degradation via glycerol kinase pathway; sn-glycerol 3-phosphate from glycerol: step 1/1. With respect to regulation, inhibited by fructose 1,6-bisphosphate (FBP). Key enzyme in the regulation of glycerol uptake and metabolism. Catalyzes the phosphorylation of glycerol to yield sn-glycerol 3-phosphate. This is Glycerol kinase from Solidesulfovibrio magneticus (strain ATCC 700980 / DSM 13731 / RS-1) (Desulfovibrio magneticus).